The primary structure comprises 416 residues: 4-hydroxy-3-methylbut-2-en-1-yl diphosphate synthase (flavodoxin) (416 aa).

Cys304, Cys307, Cys350, and Glu357 together coordinate [4Fe-4S] cluster.

The protein belongs to the IspG family. [4Fe-4S] cluster serves as cofactor.

It carries out the reaction (2E)-4-hydroxy-3-methylbut-2-enyl diphosphate + oxidized [flavodoxin] + H2O + 2 H(+) = 2-C-methyl-D-erythritol 2,4-cyclic diphosphate + reduced [flavodoxin]. It functions in the pathway isoprenoid biosynthesis; isopentenyl diphosphate biosynthesis via DXP pathway; isopentenyl diphosphate from 1-deoxy-D-xylulose 5-phosphate: step 5/6. Its function is as follows. Converts 2C-methyl-D-erythritol 2,4-cyclodiphosphate (ME-2,4cPP) into 1-hydroxy-2-methyl-2-(E)-butenyl 4-diphosphate. The protein is 4-hydroxy-3-methylbut-2-en-1-yl diphosphate synthase (flavodoxin) of Agrobacterium fabrum (strain C58 / ATCC 33970) (Agrobacterium tumefaciens (strain C58)).